The following is a 43-amino-acid chain: MANKPLQPISYPIFTFRWLAIHGLAIPTVFFFGAITAMQFIQR.

Residues 18–34 form a helical membrane-spanning segment; that stretch reads WLAIHGLAIPTVFFFGA. A heme-binding site is contributed by His-22.

Belongs to the PsbE/PsbF family. As to quaternary structure, heterodimer of an alpha subunit and a beta subunit. PSII is composed of 1 copy each of membrane proteins PsbA, PsbB, PsbC, PsbD, PsbE, PsbF, PsbH, PsbI, PsbJ, PsbK, PsbL, PsbM, PsbT, PsbY, PsbZ, Psb30/Ycf12, at least 3 peripheral proteins of the oxygen-evolving complex and a large number of cofactors. It forms dimeric complexes. It depends on heme b as a cofactor.

The protein localises to the plastid. Its subcellular location is the chloroplast thylakoid membrane. Its function is as follows. This b-type cytochrome is tightly associated with the reaction center of photosystem II (PSII). PSII is a light-driven water:plastoquinone oxidoreductase that uses light energy to abstract electrons from H(2)O, generating O(2) and a proton gradient subsequently used for ATP formation. It consists of a core antenna complex that captures photons, and an electron transfer chain that converts photonic excitation into a charge separation. This Cyanidium caldarium (Red alga) protein is Cytochrome b559 subunit beta.